A 216-amino-acid polypeptide reads, in one-letter code: Acetate CoA-transferase subunit beta (216 aa).

Glu-46 is a catalytic residue.

It belongs to the 3-oxoacid CoA-transferase subunit B family. Heterotetramer composed of two alpha subunits (AtoD) and two beta subunits (AtoA).

It is found in the cytoplasm. It carries out the reaction an acyl-CoA + acetate = a carboxylate + acetyl-CoA. The enzyme catalyses acetoacetate + acetyl-CoA = acetoacetyl-CoA + acetate. The catalysed reaction is butanoate + acetyl-CoA = butanoyl-CoA + acetate. It catalyses the reaction acetoacetate + butanoyl-CoA = acetoacetyl-CoA + butanoate. Its pathway is lipid metabolism; short-chain fatty acid metabolism. With respect to regulation, inhibited by p-chloromercuribenzoate. Coenzyme A transferase which is involved in short-chain fatty acid degradation and catalyzes the activation of short-chain fatty acids to their respective CoA thiolesters. During acetoacetate degradation, catalyzes the transfer of CoA from acetyl-CoA to acetoacetate by a mechanism involving a covalent enzyme-CoA compound as a reaction intermediate. Utilizes a variety of short chain acyl-CoA and carboxylic acid substrates but exhibits maximal activity with normal and 3-keto substrates. The chain is Acetate CoA-transferase subunit beta from Escherichia coli (strain K12).